The following is a 200-amino-acid chain: MAGLKQHSGLVVPLDAANVDTDAIIPKQFLQAITRVGFGKHLFHEWRYLDAEETRLNPDFVLNFPQYQGATILLTRKNLGCGSSREHAPWALADYGFKVMIAPSFADIFYNNSLNNHMLPIRLSEEEVEEIFQWVWANEGKQIHIDLEAMTVTVGDKIYRFELDEFRRHCLLNGLDNIGLTLQHEDAITAYESKIPAFLR.

This sequence belongs to the LeuD family. LeuD type 1 subfamily. In terms of assembly, heterodimer of LeuC and LeuD.

The enzyme catalyses (2R,3S)-3-isopropylmalate = (2S)-2-isopropylmalate. It functions in the pathway amino-acid biosynthesis; L-leucine biosynthesis; L-leucine from 3-methyl-2-oxobutanoate: step 2/4. Catalyzes the isomerization between 2-isopropylmalate and 3-isopropylmalate, via the formation of 2-isopropylmaleate. The chain is 3-isopropylmalate dehydratase small subunit from Actinobacillus pleuropneumoniae serotype 5b (strain L20).